The primary structure comprises 330 residues: Protein TIFY 11f (330 aa).

Residues 61 to 97 (EAAAAAQLKIMYGGRMLVFDDFFPAGGAVVELVRAAA) enclose the Tify 1 domain. A Jas motif is present at residues 124 to 142 (PVVRKVSLQRFVEKRRRMR). The Nuclear localization signal motif lies at 126-133 (VRKVSLQR). In terms of domain architecture, Tify 2 spans 228 to 264 (EAAAAAQLKIMYGGRMLVFDDFFPAGGAVVELVRAAA). Positions 267-330 (GRDDDGARAR…SGRTDDAAFY (64 aa)) are disordered.

The protein belongs to the TIFY/JAZ family. Post-translationally, ubiquitinated. Targeted for degradation by the SCF(COI1) E3 ubiquitin ligase-proteasome pathway during jasmonate signaling.

Its subcellular location is the nucleus. Functionally, repressor of jasmonate responses. This is Protein TIFY 11f from Oryza sativa subsp. japonica (Rice).